We begin with the raw amino-acid sequence, 198 residues long: Glycerol-3-phosphate acyltransferase (198 aa).

A run of 3 helical transmembrane segments spans residues 5–25 (AVIL…GYLI), 114–134 (VLIM…IAVL), and 154–176 (AFAL…LVAV).

The protein belongs to the PlsY family. Probably interacts with PlsX.

It is found in the cell membrane. The enzyme catalyses an acyl phosphate + sn-glycerol 3-phosphate = a 1-acyl-sn-glycero-3-phosphate + phosphate. The protein operates within lipid metabolism; phospholipid metabolism. Catalyzes the transfer of an acyl group from acyl-phosphate (acyl-PO(4)) to glycerol-3-phosphate (G3P) to form lysophosphatidic acid (LPA). This enzyme utilizes acyl-phosphate as fatty acyl donor, but not acyl-CoA or acyl-ACP. The protein is Glycerol-3-phosphate acyltransferase of Desulforudis audaxviator (strain MP104C).